The primary structure comprises 434 residues: Enolase (434 aa).

(2R)-2-phosphoglycerate is bound at residue glutamine 163. Glutamate 205 functions as the Proton donor in the catalytic mechanism. Aspartate 243, glutamate 291, and aspartate 318 together coordinate Mg(2+). Positions 343, 372, 373, and 394 each coordinate (2R)-2-phosphoglycerate. Catalysis depends on lysine 343, which acts as the Proton acceptor.

Belongs to the enolase family. The cofactor is Mg(2+).

The protein localises to the cytoplasm. It localises to the secreted. Its subcellular location is the cell surface. The enzyme catalyses (2R)-2-phosphoglycerate = phosphoenolpyruvate + H2O. The protein operates within carbohydrate degradation; glycolysis; pyruvate from D-glyceraldehyde 3-phosphate: step 4/5. In terms of biological role, catalyzes the reversible conversion of 2-phosphoglycerate (2-PG) into phosphoenolpyruvate (PEP). It is essential for the degradation of carbohydrates via glycolysis. In Fusobacterium nucleatum subsp. nucleatum (strain ATCC 25586 / DSM 15643 / BCRC 10681 / CIP 101130 / JCM 8532 / KCTC 2640 / LMG 13131 / VPI 4355), this protein is Enolase.